The following is an 827-amino-acid chain: MQEKYLFSEIEPKWQKKWVDRKDYQAEEHSDKPKFYALAMFPYPSGNLHMGHVRNYSIVDVIARFKRMRGYNVLHPIGWDSFGLPAENAAIKNQTPPAEWTWKNIANMKRQLQEMGISYDWEREVTTCHPDYYKFTQWIFLEFYKHGLVYKKKAGVNWCPSCATVLANEQVVDGACERCDTAVTKKDLEQWFFKITDYAQVLLDDLEKLPGWPDKVKTMQKNWIGRSEGAEVEFDLENHGDKIRVYTTRVDTIFGVSYVVLAPEHPLVQKLIAGTEYENDVQAFIERMKGLNEIARTSTETEKEGLFTGAYCINPYSGEKVPIWIANYVLFEYGTGAVMGVPAHDERDFEFAGKYKLPIKTVILPEGTPVEEKDTPLQAAFVEEGMMVNSGEYDGLKNVEAWEKMCDKAEHDGFGERKVNFRLRDWLISRQRYWGAPIPMIYCDHCGIVPVPQDQLPVMLPDDVVFKAGENPLTTSESFKQTICPTCGGKARRETDTMDTFMCSSWYFLRYTDPHNAQLPFAKEAADHWMNVDQYVGGVEHAILHLLYSRFFTKALRDFGYLKVDEPFANLLTQGMVCLGGAKMSKSKGNVVSPEEIISKYGADTARLFILFAAPPERDLEWNDQGVEGCYRFLNRVWRLAAQYEEVLKTTGAGANEFGELDKAAKDMRRQTHQTIQRVTSDVGARFNFNTAVSAIMELVNALYLYKEQPQVNLAVAREALESILILLAPFAPHITEEIWSELGHEDSIHSREWPQVDEEALVQEEVTVVLQINGKVKERIQVPAQISAAELEAQVRQLPRLGEWTQGKQILKIVTVPGKLVNVVVK.

The 'HIGH' region signature appears at 42 to 52; that stretch reads PYPSGNLHMGH. The short motif at 583 to 587 is the 'KMSKS' region element; sequence KMSKS. Lys-586 provides a ligand contact to ATP.

This sequence belongs to the class-I aminoacyl-tRNA synthetase family.

The protein localises to the cytoplasm. It carries out the reaction tRNA(Leu) + L-leucine + ATP = L-leucyl-tRNA(Leu) + AMP + diphosphate. This chain is Leucine--tRNA ligase, found in Desulfitobacterium hafniense (strain DSM 10664 / DCB-2).